A 674-amino-acid chain; its full sequence is Protein tesmin/TSO1-like CXC 2 (674 aa).

2 stretches are compositionally biased toward polar residues: residues 1 to 16 (MDTP…TPIS) and 76 to 89 (THNS…NSVE). Disordered stretches follow at residues 1 to 20 (MDTP…KSRF) and 69 to 113 (KESR…GLNI). The span at 95–109 (STSHEEVPAEGEDTK) shows a compositional bias: basic and acidic residues. One can recognise a CRC domain in the interval 373-498 (SCKRCNCKKS…RCEGCKNAFG (126 aa)). 2 disordered regions span residues 504–529 (SIDM…SQQN) and 623–655 (IPNI…RRNG). The segment covering 507–516 (MEAEQEEENE) has biased composition (acidic residues).

Belongs to the lin-54 family. In terms of tissue distribution, ubiquitous but expressed mostly in all the aerial organs with highest expression in flowers.

Its subcellular location is the nucleus. Plays a role in development of both male and female reproductive tissues. The sequence is that of Protein tesmin/TSO1-like CXC 2 (TCX2) from Arabidopsis thaliana (Mouse-ear cress).